Reading from the N-terminus, the 407-residue chain is Peptidase T (407 aa).

Histidine 81 lines the Zn(2+) pocket. The active site involves aspartate 83. Zn(2+) is bound at residue aspartate 142. Glutamate 176 functions as the Proton acceptor in the catalytic mechanism. Zn(2+)-binding residues include glutamate 177, aspartate 199, and histidine 381.

This sequence belongs to the peptidase M20B family. It depends on Zn(2+) as a cofactor.

The protein resides in the cytoplasm. It catalyses the reaction Release of the N-terminal residue from a tripeptide.. Cleaves the N-terminal amino acid of tripeptides. This chain is Peptidase T, found in Streptococcus pneumoniae (strain JJA).